A 256-amino-acid polypeptide reads, in one-letter code: Thrombin-like enzyme cerastocytin (256 aa).

Residues 1-18 (MVLISVLASLLVLQLSYA) form the signal peptide. Residues 19–24 (QKSSEL) constitute a propeptide that is removed on maturation. Residues 25-247 (VIGGAECNIN…YTDWIRNIIA (223 aa)) enclose the Peptidase S1 domain. 5 cysteine pairs are disulfide-bonded: Cys-31/Cys-161, Cys-98/Cys-254, Cys-140/Cys-208, Cys-172/Cys-187, and Cys-198/Cys-223. The N-linked (GlcNAc...) asparagine glycan is linked to Asn-44. Active-site charge relay system residues include His-65 and Asp-108. Residues Asn-119, Asn-120, and Asn-152 are each glycosylated (N-linked (GlcNAc...) asparagine). Ser-202 functions as the Charge relay system in the catalytic mechanism.

This sequence belongs to the peptidase S1 family. Snake venom subfamily. Monomer. Expressed by the venom gland.

It is found in the secreted. Its activity is regulated as follows. Its platelets aggregating activity is inhibited by chlorpromazine, theophylline mepacrine. Its platelet aggregating activity and its amidolytic activity are inhibited by PMSF, TPCK, TLCK and soybean trypsin inhibitors. Is unaffected by hirudin or by antithrombin-III in the presence of heparin. In terms of biological role, thrombin-like snake venom serine protease which potently induces platelet aggregation and has fibrinogenolytic activities. Clots purified fibrinogen and hydrolyzes alpha-chains (FGA). High concentrations of this enzyme also cleave prothrombin (F2) and factor X (F10). Is also able to activate factor XIII (F8). The sequence is that of Thrombin-like enzyme cerastocytin from Cerastes cerastes (Horned desert viper).